A 426-amino-acid polypeptide reads, in one-letter code: Histidine--tRNA ligase (426 aa).

The protein belongs to the class-II aminoacyl-tRNA synthetase family. Homodimer.

The protein resides in the cytoplasm. It carries out the reaction tRNA(His) + L-histidine + ATP = L-histidyl-tRNA(His) + AMP + diphosphate + H(+). The sequence is that of Histidine--tRNA ligase from Streptococcus pyogenes serotype M1.